A 504-amino-acid polypeptide reads, in one-letter code: Pre-mRNA-processing factor 19 (504 aa).

S2 is subject to N-acetylserine. Residues 2–73 form the U-box domain; that stretch reads SLICSISNEV…KPPSATSIPA (72 aa). The segment at 68–223 is may mediate interaction with PSMC5; the sequence is ATSIPAILKA…VGLHSASIPG (156 aa). Residues K122, K179, K244, and K261 each carry the N6-acetyllysine modification. A WD 1 repeat occupies 219–259; that stretch reads ASIPGILALDLCPSDTNKILTGGADKNVVVFDKSSEQILAT. 6 WD repeats span residues 262–301, 304–345, 348–387, 390–429, 433–472, and 473–503; these read GHTKKVTSVVFHPSQELVFSASPDATIRIWSVPNASCVQV, AHES…TKVT, TSGCSLTCAQFHPDGLIFGTGTMDSQIKIWDLKERTNVAN, GHSGPITSIAFSENGYYLATAADDSSVKLWDLRKLKNFKT, DNNFEVKSLIFDQSGTYLALGGTDVQIYICKQWTEILHFT, and EHSGLTTGVAFGHHAKFIASTGMDRSLKFYS.

The protein belongs to the WD repeat PRP19 family. In terms of assembly, homotetramer. Component of activated, catalytic and post-catalytic spliceosomes. Component of the Prp19 complex/PRP19C/Nineteen complex/NTC and related complexes described as PRP19-CDC5L splicing complex and PSO4 complex. A homotetramer of PRPF19, CDC5L, PLRG1 and BCAS2 constitute the core of those complexes. The interaction with CDC5L, PLRG1 and BCAS2 is direct within this core complex. At least three less stably associated proteins CTNNBL1, CWC15 and HSPA8 are found in the Prp19 complex. The Prp19 complex associates with the spliceosome during its assembly and remodeling recruiting additional proteins. Component of the XAB2 complex, a multimeric protein complex composed of XAB2, PRPF19, AQR, ZNF830, ISY1, and PPIE. Interacts with CWC22 and EIF4A3 in an RNA-independent manner. Interacts with RPA1 and RPA2; the PRP19-CDC5L complex is recruited to the sites of DNA repair where it interacts with the replication protein A complex (RPA). Interacts with SETMAR; required for SETMAR recruitment to site of DNA damage. Interacts with U2AF2; the interaction is direct and recruits the Prp19 complex to RNA polymerase II C-terminal domain (CTD) and the pre-mRNA. Interacts with PRPF3. Interacts with APEX1, DNTT and PSMB4. Interacts with PSMC5. Interacts with KNSTRN. Interacts (via N-terminus) with CDC5L. Interacts with KHDC4. Interacts with USB1. Interacts with DDX41.

It is found in the nucleus. It localises to the nucleoplasm. The protein resides in the cytoplasm. The protein localises to the cytoskeleton. Its subcellular location is the spindle. It is found in the lipid droplet. The catalysed reaction is S-ubiquitinyl-[E2 ubiquitin-conjugating enzyme]-L-cysteine + [acceptor protein]-L-lysine = [E2 ubiquitin-conjugating enzyme]-L-cysteine + N(6)-ubiquitinyl-[acceptor protein]-L-lysine.. The protein operates within protein modification; protein ubiquitination. In terms of biological role, ubiquitin-protein ligase which is a core component of several complexes mainly involved pre-mRNA splicing and DNA repair. Required for pre-mRNA splicing as component of the spliceosome. Core component of the PRP19C/Prp19 complex/NTC/Nineteen complex which is part of the spliceosome and participates in its assembly, its remodeling and is required for its activity. During assembly of the spliceosome, mediates 'Lys-63'-linked polyubiquitination of the U4 spliceosomal protein PRPF3. Ubiquitination of PRPF3 allows its recognition by the U5 component PRPF8 and stabilizes the U4/U5/U6 tri-snRNP spliceosomal complex. Recruited to RNA polymerase II C-terminal domain (CTD) and the pre-mRNA, it may also couple the transcriptional and spliceosomal machineries. The XAB2 complex, which contains PRPF19, is also involved in pre-mRNA splicing, transcription and transcription-coupled repair. Beside its role in pre-mRNA splicing PRPF19, as part of the PRP19-CDC5L complex, plays a role in the DNA damage response/DDR. It is recruited to the sites of DNA damage by the RPA complex where PRPF19 directly ubiquitinates RPA1 and RPA2. 'Lys-63'-linked polyubiquitination of the RPA complex allows the recruitment of the ATR-ATRIP complex and the activation of ATR, a master regulator of the DNA damage response. May also play a role in DNA double-strand break (DSB) repair by recruiting the repair factor SETMAR to altered DNA. As part of the PSO4 complex may also be involved in the DNA interstrand cross-links/ICLs repair process. In addition, may also mediate 'Lys-48'-linked polyubiquitination of substrates and play a role in proteasomal degradation. May play a role in the biogenesis of lipid droplets. May play a role in neural differentiation possibly through its function as part of the spliceosome. The sequence is that of Pre-mRNA-processing factor 19 (PRPF19) from Bos taurus (Bovine).